A 669-amino-acid chain; its full sequence is Acyl-coenzyme A oxidase 1 (669 aa).

FAD contacts are provided by Thr152 and Gly191. Residue Glu434 is the Proton acceptor of the active site. Tyr544 is subject to Phosphotyrosine. Ser551 carries the post-translational modification Phosphoserine. Residues 667 to 669 carry the Microbody targeting signal motif; sequence AHL.

The protein belongs to the acyl-CoA oxidase family. Homodimer. It depends on FAD as a cofactor. As to expression, expressed in glia.

Its subcellular location is the peroxisome. It is found in the nucleus. The enzyme catalyses a 2,3-saturated acyl-CoA + O2 = a (2E)-enoyl-CoA + H2O2. Its pathway is lipid metabolism; peroxisomal fatty acid beta-oxidation. Functionally, catalyzes the desaturation of acyl-CoAs to 2-trans-enoyl-CoAs. First enzyme of the fatty acid beta-oxidation pathway. The polypeptide is Acyl-coenzyme A oxidase 1 (Drosophila melanogaster (Fruit fly)).